Reading from the N-terminus, the 130-residue chain is Small ribosomal subunit protein uS9 (130 aa).

The disordered stretch occupies residues 102–130; the sequence is GFLTRDPRKKERKKYGLKKARKSPQFSKR. Residues 111 to 130 are compositionally biased toward basic residues; it reads KERKKYGLKKARKSPQFSKR.

Belongs to the universal ribosomal protein uS9 family.

The chain is Small ribosomal subunit protein uS9 from Finegoldia magna (strain ATCC 29328 / DSM 20472 / WAL 2508) (Peptostreptococcus magnus).